Reading from the N-terminus, the 303-residue chain is N-acetyl-D-glucosamine kinase (303 aa).

Residues 4–11 (GFDIGGTK) and 133–140 (GVGGGLVL) each bind ATP. Zn(2+) is bound by residues His157, Cys177, Cys179, and Cys184.

This sequence belongs to the ROK (NagC/XylR) family. NagK subfamily.

It catalyses the reaction N-acetyl-D-glucosamine + ATP = N-acetyl-D-glucosamine 6-phosphate + ADP + H(+). Its pathway is cell wall biogenesis; peptidoglycan recycling. In terms of biological role, catalyzes the phosphorylation of N-acetyl-D-glucosamine (GlcNAc) derived from cell-wall degradation, yielding GlcNAc-6-P. In Salmonella choleraesuis (strain SC-B67), this protein is N-acetyl-D-glucosamine kinase.